A 293-amino-acid polypeptide reads, in one-letter code: Undecaprenyl-diphosphatase (293 aa).

Transmembrane regions (helical) follow at residues 3-23 (IALAIKALILGIVEGLTEFLP), 43-63 (KGKIFEIVIQFGAILAVCWEF), 85-105 (LNVIVATIPAITLALIFGKAI), 109-129 (LFNPIVVASAFIIGGLVILWA), 203-223 (VATEFSFFLAIPVIFGATVYE), 238-258 (IFGIGFVAAFISAFFCVRWLL), and 269-289 (FAWYRIVFGVIVLVTAYTHLI).

This sequence belongs to the UppP family.

It is found in the cell inner membrane. The catalysed reaction is di-trans,octa-cis-undecaprenyl diphosphate + H2O = di-trans,octa-cis-undecaprenyl phosphate + phosphate + H(+). Its function is as follows. Catalyzes the dephosphorylation of undecaprenyl diphosphate (UPP). Confers resistance to bacitracin. The protein is Undecaprenyl-diphosphatase of Ralstonia nicotianae (strain ATCC BAA-1114 / GMI1000) (Ralstonia solanacearum).